Consider the following 264-residue polypeptide: Tetraspanin-12 (264 aa).

At 1–13 the chain is on the cytoplasmic side; it reads MLRLSNAAVITTN. Residues 14–34 form a helical membrane-spanning segment; sequence AILALIGLAALSFSVYVYVQG. At 35-45 the chain is on the extracellular side; sequence PSQCQRFVQNP. A helical membrane pass occupies residues 46–66; sequence LIVTAALLFFISSLGLIAALY. Residues 67-75 lie on the Cytoplasmic side of the membrane; it reads GSHIIITLY. A helical transmembrane segment spans residues 76–96; the sequence is LFFLFLSILLLLVLSVFIFLV. Residues 97–228 are Extracellular-facing; sequence TNPTAGKALS…VLKGIRKRWR (132 aa). Residue Asn180 is glycosylated (N-linked (GlcNAc...) asparagine). A helical membrane pass occupies residues 229 to 249; the sequence is ILIVVNLLLILLVVFLYSCGC. Topologically, residues 250–264 are cytoplasmic; sequence CVRKNNRVPWKRRFF.

This sequence belongs to the tetraspanin (TM4SF) family.

The protein localises to the membrane. Functionally, may be involved in the regulation of cell differentiation. In Arabidopsis thaliana (Mouse-ear cress), this protein is Tetraspanin-12 (TET12).